The primary structure comprises 461 residues: Photosystem II CP43 reaction center protein (461 aa).

The propeptide occupies 1–2 (ME). Residue Thr3 is modified to N-acetylthreonine. A Phosphothreonine modification is found at Thr3. The next 5 helical transmembrane spans lie at 57–81 (LFEV…PHLA), 122–143 (IIGP…KDKN), 166–188 (KAMF…RVIS), 243–263 (KPFS…LSYS), and 279–300 (WFNN…ASQA). A [CaMn4O5] cluster-binding site is contributed by Glu355. Residues 435-459 (RARAASGGFEKGLDRENEPVLSMKL) form a helical membrane-spanning segment.

The protein belongs to the PsbB/PsbC family. PsbC subfamily. As to quaternary structure, PSII is composed of 1 copy each of membrane proteins PsbA, PsbB, PsbC, PsbD, PsbE, PsbF, PsbH, PsbI, PsbJ, PsbK, PsbL, PsbM, PsbT, PsbX, PsbY, PsbZ, Psb30/Ycf12, at least 3 peripheral proteins of the oxygen-evolving complex and a large number of cofactors. It forms dimeric complexes. It depends on Binds multiple chlorophylls and provides some of the ligands for the Ca-4Mn-5O cluster of the oxygen-evolving complex. It may also provide a ligand for a Cl- that is required for oxygen evolution. PSII binds additional chlorophylls, carotenoids and specific lipids. as a cofactor.

The protein localises to the plastid. The protein resides in the cyanelle thylakoid membrane. Its function is as follows. One of the components of the core complex of photosystem II (PSII). It binds chlorophyll and helps catalyze the primary light-induced photochemical processes of PSII. PSII is a light-driven water:plastoquinone oxidoreductase, using light energy to abstract electrons from H(2)O, generating O(2) and a proton gradient subsequently used for ATP formation. This Cyanophora paradoxa protein is Photosystem II CP43 reaction center protein.